The sequence spans 260 residues: Opacity protein opA58 (260 aa).

Positions 1 to 23 (MNPAPKKPSLLFSSLLFSSAAQA) are cleaved as a signal peptide.

This sequence belongs to the opacity porin family.

The protein resides in the cell outer membrane. In terms of biological role, implicated in a number of adherence functions. OPA proteins are implicated in pathogenesis and are subject to phase variation. This Neisseria gonorrhoeae protein is Opacity protein opA58 (opaJ).